The chain runs to 284 residues: Cell division protein FtsQ (284 aa).

Residues 1-10 (MAFGKSKNRR) show a composition bias toward basic residues. The tract at residues 1 to 23 (MAFGKSKNRRRQDAAQQKEAVRG) is disordered. Residues 1–34 (MAFGKSKNRRRQDAAQQKEAVRGAVRSQGPRALK) are Cytoplasmic-facing. Residues 35-52 (VLGLTLGTGLLVWGGAAL) traverse the membrane as a helical segment. Residues 53-284 (REWTLTSPRF…ASERSGASMR (232 aa)) are Periplasmic-facing. The POTRA domain maps to 62–130 (FELEAVSFSG…NRVSVEVTEH (69 aa)).

The protein belongs to the FtsQ/DivIB family. FtsQ subfamily.

It is found in the cell inner membrane. Essential cell division protein. The protein is Cell division protein FtsQ of Myxococcus fulvus (strain ATCC BAA-855 / HW-1).